The sequence spans 409 residues: Arginine deiminase (409 aa).

The active-site Amidino-cysteine intermediate is the Cys399.

It belongs to the arginine deiminase family.

It is found in the cytoplasm. The catalysed reaction is L-arginine + H2O = L-citrulline + NH4(+). It participates in amino-acid degradation; L-arginine degradation via ADI pathway; carbamoyl phosphate from L-arginine: step 1/2. The chain is Arginine deiminase from Streptococcus sanguinis (strain SK36).